We begin with the raw amino-acid sequence, 751 residues long: Conserved oligomeric Golgi complex subunit 5 (751 aa).

Disordered stretches follow at residues 1-21 (MVTG…DDND) and 244-263 (SPTH…KTPQ).

The protein belongs to the COG5 family. Component of the conserved oligomeric Golgi complex which is composed of eight different subunits and is required for normal Golgi morphology and localization.

It localises to the golgi apparatus membrane. Functionally, required for normal Golgi function and necessary during spermatogenesis. Required for cleavage furrow ingression during cytokinesis in dividing spermatocytes and for the extensive polarized cell growth that accompanies spermatid elongation. This Drosophila melanogaster (Fruit fly) protein is Conserved oligomeric Golgi complex subunit 5 (fws).